The sequence spans 959 residues: Protein moonraker (959 aa).

Positions 124-156 (LPHSSHKGMHTKVERKDSKSQDVCHCSHQPSRV) are disordered. Over residues 134–145 (TKVERKDSKSQD) the composition is skewed to basic and acidic residues. Ser279 carries the phosphoserine modification. Residues 456–470 (EEAPRIEDNGTDFKD) are compositionally biased toward basic and acidic residues. Disordered regions lie at residues 456–560 (EEAP…ASPK) and 572–610 (RDAAKEQSLQQEDIHKESQLRGDAEQEAARLSWPDAESS). The span at 515-533 (PNQPYSKSRLQQTTVSSRL) shows a compositional bias: polar residues. The span at 547 to 558 (WIPPNPTSPPAS) shows a compositional bias: pro residues. Residues 582–674 (QEDIHKESQL…TQLADKVEEA (93 aa)) adopt a coiled-coil conformation. Positions 583-599 (EDIHKESQLRGDAEQEA) are enriched in basic and acidic residues. A Phosphoserine modification is found at Ser691. Disordered stretches follow at residues 692 to 721 (SVEANSHLKDRPSRHAAAAAQPAEQASDVP) and 848 to 883 (LDESVTTEEGSEKREAPLPLSREDLHQRKGQTPLSV). Residues 707 to 717 (AAAAAQPAEQA) show a composition bias toward low complexity. Basic and acidic residues predominate over residues 857-874 (GSEKREAPLPLSREDLHQ). The interval 877–959 (GQTPLSVPPR…FTSEFLEAAA (83 aa)) is necessary and sufficient for CEP20-binding.

In terms of assembly, interacts with CEP63 and WDR62. Forms a complex with OFD1 and CEP20/FOR20. Interacts with PCM1.

Its subcellular location is the cytoplasm. It is found in the cytoskeleton. The protein resides in the microtubule organizing center. It localises to the centrosome. The protein localises to the centriolar satellite. Its function is as follows. Involved in centriole duplication. Positively regulates CEP63 centrosomal localization. Required for WDR62 centrosomal localization and promotes the centrosomal localization of CDK2. May play a role in cilium assembly. The sequence is that of Protein moonraker (Kiaa0753) from Mus musculus (Mouse).